Here is a 395-residue protein sequence, read N- to C-terminus: Protochlorophyllide reductase B, chloroplastic (395 aa).

The N-terminal 59 residues, Met1–Ala59, are a transit peptide targeting the chloroplast.

The protein belongs to the short-chain dehydrogenases/reductases (SDR) family. POR subfamily.

The protein resides in the plastid. It is found in the chloroplast. It catalyses the reaction chlorophyllide a + NADP(+) = protochlorophyllide a + NADPH + H(+). It participates in porphyrin-containing compound metabolism; chlorophyll biosynthesis. Phototransformation of protochlorophyllide (Pchlide) to chlorophyllide (Chlide). The protein is Protochlorophyllide reductase B, chloroplastic (PORB) of Hordeum vulgare (Barley).